The chain runs to 85 residues: MAHKKAGGSTNNGRDSESKRLGVKRFGGESVLAGNILVRQRGTKFHAGINVGIGKDHTLFAKATGVVKFEKKGPKMRSFITIVAE.

A disordered region spans residues 1–22; sequence MAHKKAGGSTNNGRDSESKRLG.

Belongs to the bacterial ribosomal protein bL27 family.

This Psychromonas ingrahamii (strain DSM 17664 / CCUG 51855 / 37) protein is Large ribosomal subunit protein bL27.